Reading from the N-terminus, the 168-residue chain is Cell division inhibitor SulA (168 aa).

The segment at 106-112 is ftsZ binding; that stretch reads ALLTGNY. The segment at 161–168 is lon protease binding; sequence KIHSSLYH.

The protein belongs to the SulA family. As to quaternary structure, interacts with FtsZ. Is rapidly cleaved and degraded by the Lon protease once DNA damage is repaired.

In terms of biological role, component of the SOS system and an inhibitor of cell division. Accumulation of SulA causes rapid cessation of cell division and the appearance of long, non-septate filaments. In the presence of GTP, binds a polymerization-competent form of FtsZ in a 1:1 ratio, thus inhibiting FtsZ polymerization and therefore preventing it from participating in the assembly of the Z ring. This mechanism prevents the premature segregation of damaged DNA to daughter cells during cell division. This Yersinia enterocolitica serotype O:8 / biotype 1B (strain NCTC 13174 / 8081) protein is Cell division inhibitor SulA.